The following is a 187-amino-acid chain: Serine/arginine-rich splicing factor RSZ21 (187 aa).

An RRM domain is found at 2-73 (TRVYVGNLDP…WRVELSHKDK (72 aa)). Disordered regions lie at residues 68–89 (LSHKDKGGRGGGGGRRGGIEDS) and 105–187 (RRGR…ANGV). A CCHC-type zinc finger spans residues 89–106 (SKCYECGELGHFARECRR). Residues 107–122 (GRGSVRRRSPSPRRRR) show a composition bias toward basic residues. A phosphoserine mark is found at S123, S132, S134, S140, S146, and S159. Residues 136–155 (RGRRSPPRRRSVTPPRRGRS) are compositionally biased toward basic residues. Positions 165 to 177 (SRRDSPRRRDSPY) are enriched in basic and acidic residues. Positions 178–187 (GRRSPYANGV) are enriched in low complexity. Phosphoserine is present on S181.

The protein belongs to the splicing factor SR family. RSZ subfamily. As to quaternary structure, component of the spliceosome. Interacts with SNRNP35, AFC2, CYP59, RS2Z33 and RNU1. Interacts with MOS14. Post-translationally, extensively phosphorylated on serine residues in the RS domain. Phosphorylated by AFC2. As to expression, expressed in roots, leaves, flowers and siliques.

Its subcellular location is the nucleus speckle. Functionally, probably involved in intron recognition and spliceosome assembly. The chain is Serine/arginine-rich splicing factor RSZ21 (RSZ21) from Arabidopsis thaliana (Mouse-ear cress).